The following is a 222-amino-acid chain: Probable transaldolase (222 aa).

Catalysis depends on lysine 91, which acts as the Schiff-base intermediate with substrate.

This sequence belongs to the transaldolase family. Type 3B subfamily.

The protein localises to the cytoplasm. It carries out the reaction D-sedoheptulose 7-phosphate + D-glyceraldehyde 3-phosphate = D-erythrose 4-phosphate + beta-D-fructose 6-phosphate. The protein operates within carbohydrate degradation; pentose phosphate pathway; D-glyceraldehyde 3-phosphate and beta-D-fructose 6-phosphate from D-ribose 5-phosphate and D-xylulose 5-phosphate (non-oxidative stage): step 2/3. Its function is as follows. Transaldolase is important for the balance of metabolites in the pentose-phosphate pathway. The sequence is that of Probable transaldolase from Chlorobaculum tepidum (strain ATCC 49652 / DSM 12025 / NBRC 103806 / TLS) (Chlorobium tepidum).